An 87-amino-acid chain; its full sequence is Small ribosomal subunit protein uS15c (87 aa).

Belongs to the universal ribosomal protein uS15 family. Part of the 30S ribosomal subunit.

The protein localises to the plastid. Its subcellular location is the chloroplast. The chain is Small ribosomal subunit protein uS15c (rps15) from Coffea arabica (Arabian coffee).